A 171-amino-acid polypeptide reads, in one-letter code: MPLLDSFTVDHTRMSAPAVRVAKTMKTPSGDTITVFDLRFTVPNKKAMPEKGIHTLEHLFAGFMRNHLNGEGVEIIDISPMGCRTGFYMSLIGQPDEQRVANAWKAAMEDVLKVKDQNHIPELNVYQCGTYEMHSLAEAQDIARDILSHTIGINHNDELALPEDKLKELQI.

Fe cation-binding residues include His-54, His-58, and Cys-128.

This sequence belongs to the LuxS family. In terms of assembly, homodimer. Fe cation serves as cofactor.

It catalyses the reaction S-(5-deoxy-D-ribos-5-yl)-L-homocysteine = (S)-4,5-dihydroxypentane-2,3-dione + L-homocysteine. Involved in the synthesis of autoinducer 2 (AI-2) which is secreted by bacteria and is used to communicate both the cell density and the metabolic potential of the environment. The regulation of gene expression in response to changes in cell density is called quorum sensing. Catalyzes the transformation of S-ribosylhomocysteine (RHC) to homocysteine (HC) and 4,5-dihydroxy-2,3-pentadione (DPD). This is S-ribosylhomocysteine lyase from Proteus mirabilis (strain HI4320).